The following is a 222-amino-acid chain: Probable pyridoxal 5'-phosphate synthase subunit SNO3 (222 aa).

Position 58–60 (58–60) interacts with L-glutamine; that stretch reads GES. Cysteine 91 functions as the Nucleophile in the catalytic mechanism. L-glutamine contacts are provided by residues arginine 120 and 151-152; that span reads IR. Catalysis depends on charge relay system residues histidine 197 and glutamate 199.

Belongs to the glutaminase PdxT/SNO family.

The catalysed reaction is aldehydo-D-ribose 5-phosphate + D-glyceraldehyde 3-phosphate + L-glutamine = pyridoxal 5'-phosphate + L-glutamate + phosphate + 3 H2O + H(+). It carries out the reaction L-glutamine + H2O = L-glutamate + NH4(+). It functions in the pathway cofactor biosynthesis; pyridoxal 5'-phosphate biosynthesis. Catalyzes the hydrolysis of glutamine to glutamate and ammonia as part of the biosynthesis of pyridoxal 5'-phosphate. The resulting ammonia molecule is channeled to the active site of a SNZ isoform. The protein is Probable pyridoxal 5'-phosphate synthase subunit SNO3 (SNO3) of Saccharomyces cerevisiae (strain ATCC 204508 / S288c) (Baker's yeast).